The chain runs to 102 residues: Large ribosomal subunit protein uL24 (102 aa).

It belongs to the universal ribosomal protein uL24 family. In terms of assembly, part of the 50S ribosomal subunit.

One of two assembly initiator proteins, it binds directly to the 5'-end of the 23S rRNA, where it nucleates assembly of the 50S subunit. Its function is as follows. One of the proteins that surrounds the polypeptide exit tunnel on the outside of the subunit. The protein is Large ribosomal subunit protein uL24 of Alcanivorax borkumensis (strain ATCC 700651 / DSM 11573 / NCIMB 13689 / SK2).